A 507-amino-acid polypeptide reads, in one-letter code: Alkyl hydroperoxide reductase subunit F (507 aa).

207–222 (DVLIVGGGPASGSAAI) contributes to the FAD binding site. An intrachain disulfide couples C335 to C338. 347–361 (DVAVIGGGNSGVEAA) contributes to the NAD(+) binding site. Position 467 to 477 (467 to 477 (TNVPGIFAAGD)) interacts with FAD.

It belongs to the class-II pyridine nucleotide-disulfide oxidoreductase family. Homodimer. The cofactor is FAD.

Its function is as follows. Serves to protect the cell against DNA damage by alkyl hydroperoxides. It can use either NADH or NADPH as electron donor for direct reduction of redox dyes or of alkyl hydroperoxides when combined with the AhpC protein. In Staphylococcus aureus (strain Mu50 / ATCC 700699), this protein is Alkyl hydroperoxide reductase subunit F (ahpF).